We begin with the raw amino-acid sequence, 808 residues long: Probable inorganic carbon transporter subunit DabA (808 aa).

Residues cysteine 334, aspartate 336, histidine 494, and cysteine 509 each contribute to the Zn(2+) site.

It belongs to the inorganic carbon transporter (TC 9.A.2) DabA family. Forms a complex with DabB. The cofactor is Zn(2+).

Its subcellular location is the cell inner membrane. Its function is as follows. Part of an energy-coupled inorganic carbon pump. In Rhodopseudomonas palustris (strain BisB5), this protein is Probable inorganic carbon transporter subunit DabA.